Consider the following 295-residue polypeptide: 4-diphosphocytidyl-2-C-methyl-D-erythritol kinase (295 aa).

The active site involves Lys22. Position 106-116 (106-116 (PAGGGFGGGSS)) interacts with ATP. Asp148 is a catalytic residue.

This sequence belongs to the GHMP kinase family. IspE subfamily.

It carries out the reaction 4-CDP-2-C-methyl-D-erythritol + ATP = 4-CDP-2-C-methyl-D-erythritol 2-phosphate + ADP + H(+). It functions in the pathway isoprenoid biosynthesis; isopentenyl diphosphate biosynthesis via DXP pathway; isopentenyl diphosphate from 1-deoxy-D-xylulose 5-phosphate: step 3/6. Its function is as follows. Catalyzes the phosphorylation of the position 2 hydroxy group of 4-diphosphocytidyl-2C-methyl-D-erythritol. In Xanthomonas campestris pv. campestris (strain 8004), this protein is 4-diphosphocytidyl-2-C-methyl-D-erythritol kinase.